The following is an 838-amino-acid chain: Alpha-glucan phosphorylase, H isozyme (838 aa).

A disordered region spans residues 1–21 (MEGGAKSNDVSAAPIAQPLSE). N6-(pyridoxal phosphate)lysine is present on lysine 684.

This sequence belongs to the glycogen phosphorylase family. The cofactor is pyridoxal 5'-phosphate.

It localises to the cytoplasm. The enzyme catalyses [(1-&gt;4)-alpha-D-glucosyl](n) + phosphate = [(1-&gt;4)-alpha-D-glucosyl](n-1) + alpha-D-glucose 1-phosphate. Functionally, phosphorylase is an important allosteric enzyme in carbohydrate metabolism. Enzymes from different sources differ in their regulatory mechanisms and in their natural substrates. However, all known phosphorylases share catalytic and structural properties. In Solanum tuberosum (Potato), this protein is Alpha-glucan phosphorylase, H isozyme.